The chain runs to 312 residues: MAVAMTPAAADELHTIVDLIRYGASRFSEAGLTFGHSYDNALDEATQLVLHALHLPPDLGPAYGQARLLRTEKECVLALFERRVTERVPVAYLTGDAWFAGLNFKSDARALVPRSPIAELIQAGFEPWLAGRDVRHALDLCTGSGCIAIAMGHYNPHWRVDGSDISEDALSLALENKVRLLAHNVELIKSDVFAGLVGRRYQLIVSNPPYVTDAETDALPQEYGYEPELGLRAGPDGLNLVLKILRDAPAHLDEEGLLICEVGESEQQLVQLLPQVDFAWVEFKVGQMGVFAVECRELIAHHDRIAALAAER.

This sequence belongs to the protein N5-glutamine methyltransferase family. PrmB subfamily.

It carries out the reaction L-glutaminyl-[ribosomal protein uL3] + S-adenosyl-L-methionine = N(5)-methyl-L-glutaminyl-[ribosomal protein uL3] + S-adenosyl-L-homocysteine + H(+). In terms of biological role, methylates large ribosomal subunit protein uL3 on a specific glutamine residue. This is Ribosomal protein uL3 glutamine methyltransferase from Xylella fastidiosa (strain Temecula1 / ATCC 700964).